Consider the following 504-residue polypeptide: Maturase K (504 aa).

This sequence belongs to the intron maturase 2 family. MatK subfamily.

It localises to the plastid. The protein resides in the chloroplast. In terms of biological role, usually encoded in the trnK tRNA gene intron. Probably assists in splicing its own and other chloroplast group II introns. This Quercus suber (Cork oak) protein is Maturase K.